A 386-amino-acid chain; its full sequence is Orphan methyltransferase M.SssI (386 aa).

The 376-residue stretch at leucine 11 to glycine 386 folds into the SAM-dependent MTase C5-type domain. The active site involves cysteine 141.

The protein belongs to the class I-like SAM-binding methyltransferase superfamily. C5-methyltransferase family.

It carries out the reaction a 2'-deoxycytidine in DNA + S-adenosyl-L-methionine = a 5-methyl-2'-deoxycytidine in DNA + S-adenosyl-L-homocysteine + H(+). In terms of biological role, this de novo methylase acts completely and exclusively on CG residues in DNA; methylates unmethylated and hemi-methylated DNA. The chain is Orphan methyltransferase M.SssI (sssIM) from Spiroplasma monobiae (strain ATCC 33825 / MQ-1).